The primary structure comprises 225 residues: UPF0758 protein Shewmr4_3597 (225 aa).

The 123-residue stretch at Val-102 to Ile-224 folds into the MPN domain. Zn(2+) contacts are provided by His-173, His-175, and Asp-186. The JAMM motif motif lies at His-173 to Asp-186.

Belongs to the UPF0758 family.

The protein is UPF0758 protein Shewmr4_3597 of Shewanella sp. (strain MR-4).